The chain runs to 170 residues: Probable chorismate pyruvate-lyase (170 aa).

Positions 77, 114, and 157 each coordinate substrate.

This sequence belongs to the UbiC family.

It is found in the cytoplasm. It carries out the reaction chorismate = 4-hydroxybenzoate + pyruvate. It functions in the pathway cofactor biosynthesis; ubiquinone biosynthesis. Its function is as follows. Removes the pyruvyl group from chorismate, with concomitant aromatization of the ring, to provide 4-hydroxybenzoate (4HB) for the ubiquinone pathway. In Pasteurella multocida (strain Pm70), this protein is Probable chorismate pyruvate-lyase.